Consider the following 631-residue polypeptide: Probable basic-leucine zipper transcription factor F (631 aa).

Residues 35–62 are a coiled coil; the sequence is KKNANVFNNFQQQQQQIQQQNKQSNGLI. Disordered stretches follow at residues 46–117, 154–207, and 264–406; these read QQQQ…HNNI, LNNS…NNQF, and MLNV…ERHQ. 2 stretches are compositionally biased toward low complexity: residues 155 to 206 and 271 to 360; these read NNSY…NNNQ and NNAN…GSNN. The stretch at 328 to 366 forms a coiled coil; it reads NNNNNNSNNISTQINNLNNNINNQNNQLNGSNNGKKKEE. The bZIP domain occupies 405–468; that stretch reads HQKRQRRLVK…KLIREQLLYL (64 aa). The interval 407 to 427 is basic motif; it reads KRQRRLVKNREAAQLFRQRQK. Residues 433–440 form a leucine-zipper region; it reads LEKKVSDL. The tract at residues 546–631 is disordered; the sequence is QGNLLGTPIP…PPQQSTPNQR (86 aa). Composition is skewed to low complexity over residues 563 to 609 and 618 to 631; these read SNSG…PNSS and PQNTPPQQSTPNQR.

It belongs to the bZIP family.

The protein resides in the nucleus. Functionally, probable transcriptional regulator. The polypeptide is Probable basic-leucine zipper transcription factor F (bzpF) (Dictyostelium discoideum (Social amoeba)).